Reading from the N-terminus, the 121-residue chain is Small ribosomal subunit protein bS16 (121 aa).

A disordered region spans residues 88–121 (GKAKLEKEKKAKAKTKEEENEGSKTESGSNEAES). Residues 90 to 111 (AKLEKEKKAKAKTKEEENEGSK) are compositionally biased toward basic and acidic residues. Residues 112-121 (TESGSNEAES) show a composition bias toward polar residues.

Belongs to the bacterial ribosomal protein bS16 family.

In Prochlorococcus marinus (strain MIT 9215), this protein is Small ribosomal subunit protein bS16.